The sequence spans 923 residues: Isoleucine--tRNA ligase (923 aa).

The 'HIGH' region signature appears at 57–67 (PYANGDIHIGT). E561 lines the L-isoleucyl-5'-AMP pocket. Positions 602-606 (AMHKS) match the 'KMSKS' region motif. ATP is bound at residue K605. Zn(2+) contacts are provided by C895, C898, C915, and C918.

This sequence belongs to the class-I aminoacyl-tRNA synthetase family. IleS type 1 subfamily. In terms of assembly, monomer. The cofactor is Zn(2+).

The protein localises to the cytoplasm. The catalysed reaction is tRNA(Ile) + L-isoleucine + ATP = L-isoleucyl-tRNA(Ile) + AMP + diphosphate. Catalyzes the attachment of isoleucine to tRNA(Ile). As IleRS can inadvertently accommodate and process structurally similar amino acids such as valine, to avoid such errors it has two additional distinct tRNA(Ile)-dependent editing activities. One activity is designated as 'pretransfer' editing and involves the hydrolysis of activated Val-AMP. The other activity is designated 'posttransfer' editing and involves deacylation of mischarged Val-tRNA(Ile). The polypeptide is Isoleucine--tRNA ligase (Brachyspira hyodysenteriae (strain ATCC 49526 / WA1)).